The chain runs to 826 residues: MLTMGEGNVMTSNNRFASPPQQPSSSSPGTIQNPNFNFIPFNSYSSIIPKEEHGMMSMMMMMGDGTVEEMMENGSAGGSFGSGSEQAEDPKFGNESDVNELHDDEQPPPAKKKRYHRHTNRQIQEMEALFKENPHPDDKQRKRLSAELGLKPRQVKFWFQNRRTQMKAQQDRNENVMLRAENDNLKSENCHLQAELRCLSCPSCGGPTVLGDIPFNEIHIENCRLREELDRLCCIASRYTGRPMQSMPPSQPLINPSPMLPHHQPSLELDMSVYAGNFPEQSCTDMMMLPPQDTACFFPDQTANNNNNNNMLLADEEKVIAMEFAVSCVQELTKMCDTEEPLWIKKKSDKIGGEILCLNEEEYMRLFPWPMENQNNKGDFLREASKANAVVIMNSITLVDAFLNADKWSEMFCSIVARAKTVQIISSGVSGASGSLLLMFAELQVLSPLVPTREAYFLRYVEQNAETGNWAIVDFPIDSFHDQMQPMNTITHEYKRKPSGCIIQDMPNGYSQVKWVEHVEVDEKHVHETFAEYVKSGMAFGANRWLDVLQRQCERIASLMARNITDLGVISSAEARRNIMRLSQRLVKTFCVNISTAYGQSWTALSETTKDTVRITTRKMCEPGQPTGVVLCAVSTTWLPFSHHQVFDLIRDQHHQSLLEVLFNGNSPHEVAHIANGSHPGNCISLLRINVASNSWHNVELMLQESCIDNSGSLIVYSTVDVDSIQQAMNGEDSSNIPILPLGFSIVPVNPPEGISVNSHSPPSCLLTVGIQVLASNVPTAKPNLSTVTTINNHLCATVNQITSALSNTITPVIASSADVSNQEVS.

Disordered regions lie at residues 1–34 and 69–119; these read MLTM…IQNP and EMME…HRHT. Residues 23–34 show a composition bias toward low complexity; that stretch reads PSSSSPGTIQNP. The segment covering 88-105 has biased composition (basic and acidic residues); sequence EDPKFGNESDVNELHDDE. A compositionally biased stretch (basic residues) spans 110-119; it reads AKKKRYHRHT. Positions 111-170 form a DNA-binding region, homeobox; it reads KKKRYHRHTNRQIQEMEALFKENPHPDDKQRKRLSAELGLKPRQVKFWFQNRRTQMKAQQ. Positions 165–189 form a coiled coil; it reads QMKAQQDRNENVMLRAENDNLKSEN. The 245-residue stretch at 314–558 folds into the START domain; that stretch reads ADEEKVIAME…LQRQCERIAS (245 aa).

The protein belongs to the HD-ZIP homeobox family. Class IV subfamily. As to expression, expressed in shoot apical meristem (SAM) with higher levels in L1 cells and the epidermal layer of young leaves. Expressed in the L1 of apical inflorescence meristems, early flower primordia, carpel and stamen filament epidermis, ovule primordia, nucellus and chalaze.

It is found in the nucleus. Probable transcription factor. Involved, together with PDF2, in the regulation of flower organs development by promoting the expression of APETALA 3 (AP3) in the epidermis and internal cell layers of developing flowers. This Arabidopsis thaliana (Mouse-ear cress) protein is Homeobox-leucine zipper protein HDG5.